The sequence spans 1221 residues: Deubiquitinating protein VCPIP1 (1221 aa).

The span at M1–A19 shows a compositional bias: pro residues. The disordered stretch occupies residues M1 to D40. The 154-residue stretch at L207 to I360 folds into the OTU domain. Residue D215 is part of the active site. Catalysis depends on C218, which acts as the Nucleophile. H353 is an active-site residue. K407 is subject to N6-acetyllysine. 2 disordered regions span residues S724–I778 and E988–G1009. A phosphoserine mark is found at S746 and S756. Residues P754–T770 show a composition bias toward low complexity. The residue at position 762 (T762) is a Phosphothreonine. Phosphoserine is present on residues S767, S993, S997, and S1076. Disordered stretches follow at residues A1117–R1177 and R1189–S1221. The segment covering V1143–L1156 has biased composition (polar residues). Residues L1162–T1173 show a composition bias toward low complexity. Phosphoserine is present on residues S1197 and S1206. Acidic residues predominate over residues M1198–D1208. The span at A1209–S1221 shows a compositional bias: polar residues.

In terms of assembly, binds VCP and the ternary complex containing STX5A, NSFL1C and VCP. Post-translationally, phosphorylated at Ser-1206 by ATM or ATR following induction of covalent DNA-protein cross-links (DPCs). In terms of tissue distribution, widely expressed.

Its subcellular location is the nucleus. The protein resides in the cytoplasm. The protein localises to the endoplasmic reticulum. It localises to the golgi apparatus. It is found in the golgi stack. It catalyses the reaction Thiol-dependent hydrolysis of ester, thioester, amide, peptide and isopeptide bonds formed by the C-terminal Gly of ubiquitin (a 76-residue protein attached to proteins as an intracellular targeting signal).. Its function is as follows. Deubiquitinating enzyme involved in DNA repair and reassembly of the Golgi apparatus and the endoplasmic reticulum following mitosis. Necessary for VCP-mediated reassembly of Golgi stacks after mitosis. Plays a role in VCP-mediated formation of transitional endoplasmic reticulum (tER). Mediates dissociation of the ternary complex containing STX5A, NSFL1C and VCP. Also involved in DNA repair following phosphorylation by ATM or ATR: acts by catalyzing deubiquitination of SPRTN, thereby promoting SPRTN recruitment to chromatin and subsequent proteolytic cleavage of covalent DNA-protein cross-links (DPCs). Hydrolyzes 'Lys-11'- and 'Lys-48'-linked polyubiquitin chains. The sequence is that of Deubiquitinating protein VCPIP1 from Rattus norvegicus (Rat).